Consider the following 782-residue polypeptide: LPS-assembly protein LptD (782 aa).

The N-terminal stretch at 1–23 (MNKKHTLISLAILTALYSQQSLA) is a signal peptide.

It belongs to the LptD family. Component of the lipopolysaccharide transport and assembly complex. Interacts with LptE and LptA.

The protein resides in the cell outer membrane. Its function is as follows. Together with LptE, is involved in the assembly of lipopolysaccharide (LPS) at the surface of the outer membrane. This chain is LPS-assembly protein LptD, found in Haemophilus influenzae (strain 86-028NP).